Reading from the N-terminus, the 117-residue chain is Large ribosomal subunit protein uL18 (117 aa).

This sequence belongs to the universal ribosomal protein uL18 family. Part of the 50S ribosomal subunit; part of the 5S rRNA/L5/L18/L25 subcomplex. Contacts the 5S and 23S rRNAs.

Functionally, this is one of the proteins that bind and probably mediate the attachment of the 5S RNA into the large ribosomal subunit, where it forms part of the central protuberance. The polypeptide is Large ribosomal subunit protein uL18 (Aster yellows witches'-broom phytoplasma (strain AYWB)).